Reading from the N-terminus, the 353-residue chain is Ferredoxin--NADP reductase (353 aa).

Residues D47, Q55, Y60, V100, F135, D299, and S340 each contribute to the FAD site.

It belongs to the ferredoxin--NADP reductase type 2 family. In terms of assembly, homodimer. Requires FAD as cofactor.

It catalyses the reaction 2 reduced [2Fe-2S]-[ferredoxin] + NADP(+) + H(+) = 2 oxidized [2Fe-2S]-[ferredoxin] + NADPH. The protein is Ferredoxin--NADP reductase of Paraburkholderia xenovorans (strain LB400).